Reading from the N-terminus, the 180-residue chain is Stathmin-3 (180 aa).

Residues Cys-22 and Cys-24 are each lipidated (S-palmitoyl cysteine). The SLD domain maps to 38 to 180 (GDMEVKQLDK…NKEQREEMSG (143 aa)). A phosphoserine mark is found at Ser-50, Ser-60, Ser-65, Ser-68, Ser-72, Ser-73, and Ser-81. The tract at residues 59 to 82 (KSPSDLSPESPMLSSPPKKKDTSL) is disordered. Low complexity predominate over residues 60-74 (SPSDLSPESPMLSSP). The stretch at 75-179 (PKKKDTSLEE…RNKEQREEMS (105 aa)) forms a coiled coil.

The protein belongs to the stathmin family. Interacts with STAT3. Interacts with CLU (secreted form); this interaction may act as an important modulator during neuronal differentiation. Post-translationally, N-terminal palmitoylation promotes specific anchoring to the cytosolic leaflet of Golgi membranes and subsequent vesicular trafficking along dendrites and axons. Neuronal Stathmins are substrates for palmitoyltransferases ZDHHC3, ZDHHC7 and ZDHHC15. Neuron specific.

It is found in the golgi apparatus. Its subcellular location is the cell projection. It localises to the growth cone. The protein resides in the axon. The protein localises to the cytoplasm. It is found in the cytosol. Its function is as follows. Exhibits microtubule-destabilizing activity, which is antagonized by STAT3. This is Stathmin-3 (STMN3) from Homo sapiens (Human).